A 161-amino-acid polypeptide reads, in one-letter code: Endoribonuclease YbeY (161 aa).

The Zn(2+) site is built by His121, His125, and His131.

Belongs to the endoribonuclease YbeY family. Zn(2+) is required as a cofactor.

The protein resides in the cytoplasm. In terms of biological role, single strand-specific metallo-endoribonuclease involved in late-stage 70S ribosome quality control and in maturation of the 3' terminus of the 16S rRNA. This Xylella fastidiosa (strain 9a5c) protein is Endoribonuclease YbeY.